The sequence spans 200 residues: NADH-quinone oxidoreductase subunit C 1 (200 aa).

It belongs to the complex I 30 kDa subunit family. NDH-1 is composed of 14 different subunits. Subunits NuoB, C, D, E, F, and G constitute the peripheral sector of the complex.

It localises to the cell inner membrane. The enzyme catalyses a quinone + NADH + 5 H(+)(in) = a quinol + NAD(+) + 4 H(+)(out). NDH-1 shuttles electrons from NADH, via FMN and iron-sulfur (Fe-S) centers, to quinones in the respiratory chain. The immediate electron acceptor for the enzyme in this species is believed to be ubiquinone. Couples the redox reaction to proton translocation (for every two electrons transferred, four hydrogen ions are translocated across the cytoplasmic membrane), and thus conserves the redox energy in a proton gradient. The polypeptide is NADH-quinone oxidoreductase subunit C 1 (Rhizobium etli (strain CIAT 652)).